A 442-amino-acid polypeptide reads, in one-letter code: Microfibrillar-associated protein 1 (442 aa).

Disordered stretches follow at residues 1–34 (MSAPSALVKQPPIQSTAGACPSRNEKGRAVYGEG) and 113–203 (EVVS…PRLK). 2 stretches are compositionally biased toward acidic residues: residues 134–148 (DTSEEEEEEIDDEEI) and 181–198 (ESELESEYEEYTDSEDEM).

The protein belongs to the MFAP1 family. As to quaternary structure, component of the spliceosome B complex. Interacts with PRPF38A (via N-terminal interaction domain). Widely expressed.

The protein resides in the nucleus. Involved in pre-mRNA splicing as a component of the spliceosome. This Gallus gallus (Chicken) protein is Microfibrillar-associated protein 1.